Reading from the N-terminus, the 210-residue chain is Probable peroxygenase 7 (210 aa).

Residues Met1–Lys24 form a disordered region. The region spanning Glu25–Gly60 is the EF-hand domain. His33 serves as a coordination point for heme. Asp38, Asn40, Asp42, Thr44, and Glu49 together coordinate Ca(2+). The Proline-knot signature appears at Pro81–Pro90. Position 188 is a phosphoserine (Ser188).

It belongs to the caleosin family. Homodimer. Requires heme b as cofactor. It depends on Ca(2+) as a cofactor. In terms of tissue distribution, expressed in pollen coat.

The protein localises to the secreted. The catalysed reaction is RH + ROOH = ROH + ROH.. In terms of biological role, probable calcium-binding peroxygenase. May be involved in pollination. This Arabidopsis thaliana (Mouse-ear cress) protein is Probable peroxygenase 7 (PXG7).